The following is a 120-amino-acid chain: MSFYESVFIVRQDVSLNDIDKIVDDFTKIIKDNNGAIVKKEYWGLRALAYKIGNHKKGHYYLLGLDTTPAVKQELERKMKLNENIIRFLTQKVDSISNEPSPILKNQSTENTPVIDVTAN.

Over residues 97-112 (SNEPSPILKNQSTENT) the composition is skewed to polar residues. The tract at residues 97–120 (SNEPSPILKNQSTENTPVIDVTAN) is disordered.

Belongs to the bacterial ribosomal protein bS6 family.

Functionally, binds together with bS18 to 16S ribosomal RNA. The protein is Small ribosomal subunit protein bS6 of Rickettsia bellii (strain OSU 85-389).